The primary structure comprises 319 residues: BTB/POZ domain-containing adapter for CUL3-mediated RhoA degradation protein 2 (319 aa).

Residues 31–99 enclose the BTB domain; sequence KYIRLNVGGC…LRDDTITLPK (69 aa).

This sequence belongs to the BACURD family. In terms of assembly, component of the BCR(TNFAIP1) E3 ubiquitin ligase complex, at least composed of cul3, tnfaip1/bacurd2 and rbx1.

It localises to the cytoplasm. The protein localises to the nucleus. It is found in the endosome. Its pathway is protein modification; protein ubiquitination. In terms of biological role, substrate-specific adapter of a BCR (BTB-CUL3-RBX1) E3 ubiquitin-protein ligase complex involved in regulation of cytoskeleton structure. The BCR(TNFAIP1) E3 ubiquitin ligase complex mediates the ubiquitination of target proteins, leading to their degradation by the proteasome. The chain is BTB/POZ domain-containing adapter for CUL3-mediated RhoA degradation protein 2 (tnfaip1) from Xenopus tropicalis (Western clawed frog).